The sequence spans 114 residues: Iron-sulfur cluster assembly protein CyaY (114 aa).

It belongs to the frataxin family.

Functionally, involved in iron-sulfur (Fe-S) cluster assembly. May act as a regulator of Fe-S biogenesis. This Ralstonia pickettii (strain 12J) protein is Iron-sulfur cluster assembly protein CyaY.